The chain runs to 266 residues: Tropinone reductase homolog At1g07440 (266 aa).

18 to 42 (LVTGGTKGIGHAIVEEFAGFGAVIH) lines the NADP(+) pocket. Serine 151 provides a ligand contact to substrate. Residue tyrosine 164 is the Proton acceptor of the active site.

It belongs to the short-chain dehydrogenases/reductases (SDR) family. SDR65C subfamily.

This chain is Tropinone reductase homolog At1g07440, found in Arabidopsis thaliana (Mouse-ear cress).